The chain runs to 655 residues: Fructose-1,6-bisphosphatase class 3 (655 aa).

The protein belongs to the FBPase class 3 family. Mn(2+) serves as cofactor.

It carries out the reaction beta-D-fructose 1,6-bisphosphate + H2O = beta-D-fructose 6-phosphate + phosphate. The protein operates within carbohydrate biosynthesis; gluconeogenesis. This is Fructose-1,6-bisphosphatase class 3 from Porphyromonas gingivalis (strain ATCC BAA-308 / W83).